We begin with the raw amino-acid sequence, 392 residues long: Phospho-N-acetylmuramoyl-pentapeptide-transferase (392 aa).

Helical transmembrane passes span 28–48, 76–96, 101–121, 137–157, 181–201, 213–233, 268–288, 295–315, 320–340, and 369–389; these read IIAAGVFALLLGMLIGPKLIA, TMGGALILLCIAAGTLLFADL, VWVMLLLTLGYGFIGFLDDWL, MVLQTFFFLVAVFGLLTTWTL, WFNPDLGWFYVFFAWIVVVGT, GLAIVPTIVSAITFAVLCYVA, GAELAVFCAAIVGAGISFLWF, VFMGDIGSLALGGALGGLAML, VVSAIIHGIFFAEILSVMIQV, and KIIVRFWIVSILCGGVALLSL.

The protein belongs to the glycosyltransferase 4 family. MraY subfamily. Mg(2+) serves as cofactor.

The protein localises to the cell inner membrane. The catalysed reaction is UDP-N-acetyl-alpha-D-muramoyl-L-alanyl-gamma-D-glutamyl-meso-2,6-diaminopimeloyl-D-alanyl-D-alanine + di-trans,octa-cis-undecaprenyl phosphate = di-trans,octa-cis-undecaprenyl diphospho-N-acetyl-alpha-D-muramoyl-L-alanyl-D-glutamyl-meso-2,6-diaminopimeloyl-D-alanyl-D-alanine + UMP. Its pathway is cell wall biogenesis; peptidoglycan biosynthesis. In terms of biological role, catalyzes the initial step of the lipid cycle reactions in the biosynthesis of the cell wall peptidoglycan: transfers peptidoglycan precursor phospho-MurNAc-pentapeptide from UDP-MurNAc-pentapeptide onto the lipid carrier undecaprenyl phosphate, yielding undecaprenyl-pyrophosphoryl-MurNAc-pentapeptide, known as lipid I. This chain is Phospho-N-acetylmuramoyl-pentapeptide-transferase, found in Myxococcus xanthus (strain DK1622).